Consider the following 656-residue polypeptide: UvrABC system protein B (656 aa).

The Helicase ATP-binding domain occupies 24–409; it reads QGVRNRTPSQ…QGHIVEQILR (386 aa). 37–44 contributes to the ATP binding site; sequence GTTGSGKT. The Beta-hairpin signature appears at 90–113; the sequence is YYDYYQPEAYIARNDTYIEKSLLI. One can recognise a Helicase C-terminal domain in the interval 426-589; that stretch reads QVDDLLEEIR…ITPKPIIKAI (164 aa). A UVR domain is found at 616–651; the sequence is EKLIKKYENLMLQAANAFRFDEAAQYRDKMKAAKEQ.

The protein belongs to the UvrB family. As to quaternary structure, forms a heterotetramer with UvrA during the search for lesions. Interacts with UvrC in an incision complex.

The protein localises to the cytoplasm. Functionally, the UvrABC repair system catalyzes the recognition and processing of DNA lesions. A damage recognition complex composed of 2 UvrA and 2 UvrB subunits scans DNA for abnormalities. Upon binding of the UvrA(2)B(2) complex to a putative damaged site, the DNA wraps around one UvrB monomer. DNA wrap is dependent on ATP binding by UvrB and probably causes local melting of the DNA helix, facilitating insertion of UvrB beta-hairpin between the DNA strands. Then UvrB probes one DNA strand for the presence of a lesion. If a lesion is found the UvrA subunits dissociate and the UvrB-DNA preincision complex is formed. This complex is subsequently bound by UvrC and the second UvrB is released. If no lesion is found, the DNA wraps around the other UvrB subunit that will check the other stand for damage. In Chlamydia abortus (strain DSM 27085 / S26/3) (Chlamydophila abortus), this protein is UvrABC system protein B.